The following is a 254-amino-acid chain: Ribonuclease HII (254 aa).

The RNase H type-2 domain maps to 70–254; that stretch reads RYICGIDEVG…ASFIKNLTSC (185 aa). 3 residues coordinate a divalent metal cation: Asp76, Glu77, and Asp168.

This sequence belongs to the RNase HII family. Mn(2+) is required as a cofactor. Mg(2+) serves as cofactor.

The protein resides in the cytoplasm. The enzyme catalyses Endonucleolytic cleavage to 5'-phosphomonoester.. Endonuclease that specifically degrades the RNA of RNA-DNA hybrids. This is Ribonuclease HII from Lachnoclostridium phytofermentans (strain ATCC 700394 / DSM 18823 / ISDg) (Clostridium phytofermentans).